We begin with the raw amino-acid sequence, 466 residues long: MPRIRKPPSRSLPEPSAALANTTTRNLWLHFARHGAGIQHPVIVRGDGVTIFDDRGKSYLDALSGLFVVQVGYGRAELAEAAARQAGTLGYFPLWGYATPPAIELAERLARYAPGDLNRVFFTSGGTEAVETAWKVAKQYFKLTGKPGKQKVISRSIAYHGTTQGALAITGLPLFKAPFEPLTPGGFRVPNTNFYRAPLHTDLKEFGRWAADRIAEAIEFEGPDTVAAVFLEPVQNAGGCIPAPPGYFERVREICDRYDVLLVSDEVICAFGRIGSMFACEDLGYVPDMITCAKGLTSGYSPLGAMIASDRLFEPFNDGETMFAHGYTFGGHPVSAAVGLANLDIFEREGLSDHVKRNSPALRATLEKLYDLPIVGDIRGEGYFFGIELVKDQATKQTFTDDERARLLGQVSAALFEAGLYCRTDDRGDPVVQVAPPLISGQPEFDTIETILRSVLTDTGRKYLHL.

K294 bears the N6-(pyridoxal phosphate)lysine mark.

It belongs to the class-III pyridoxal-phosphate-dependent aminotransferase family. Requires pyridoxal 5'-phosphate as cofactor.

Functionally, probable aminotransferase. The sequence is that of Probable aminotransferase Rv3329 from Mycobacterium tuberculosis (strain ATCC 25618 / H37Rv).